A 104-amino-acid polypeptide reads, in one-letter code: Large ribosomal subunit protein uL24 (104 aa).

It belongs to the universal ribosomal protein uL24 family. In terms of assembly, part of the 50S ribosomal subunit.

In terms of biological role, one of two assembly initiator proteins, it binds directly to the 5'-end of the 23S rRNA, where it nucleates assembly of the 50S subunit. Its function is as follows. One of the proteins that surrounds the polypeptide exit tunnel on the outside of the subunit. The protein is Large ribosomal subunit protein uL24 of Pseudoalteromonas translucida (strain TAC 125).